A 673-amino-acid chain; its full sequence is RAS guanyl-releasing protein 4 (673 aa).

Composition is skewed to basic residues over residues 1–10 and 20–32; these read MNRKDIKRKS and GRGR…RHKT. Disordered stretches follow at residues 1 to 34 and 164 to 188; these read MNRK…KTCP and LGDA…PGLG. Positions 49–175 constitute an N-terminal Ras-GEF domain; it reads GVLSESSCSE…DASSLLSPGG (127 aa). Low complexity predominate over residues 164–173; the sequence is LGDASSLLSP. One can recognise a Ras-GEF domain in the interval 201 to 432; that stretch reads ETEELAQHLT…YELSYAREPR (232 aa). In terms of domain architecture, EF-hand spans 466-501; sequence HVEQLVESVFKNYDPEGRGSISLEDFERLSGNFPFA. Residues 540-590 form a Phorbol-ester/DAG-type zinc finger; it reads LHAFQEVTFRKPTFCHSCSGFLWGVTKQGYRCRDCGLCCHRHCRDQVRVEC. The interval 592 to 633 is disordered; that stretch reads KRPETKGDPGPPGAPVPATSLPPANCGSEESLSYTLSPDPES.

This sequence belongs to the RASGRP family. As to expression, expressed by mast cells and their progenitors (at protein level). Expressed by dendritic cells. Expressed in neutrophils.

The protein resides in the cytoplasm. The protein localises to the cell membrane. Functions as a cation- and diacylglycerol (DAG)-regulated nucleotide exchange factor activating Ras through the exchange of bound GDP for GTP. In neutrophils, participates in a phospholipase C-activating N-formyl peptide-activated GPCR (G protein-coupled receptor) signaling pathway by promoting Ras-mediated activation of PIK3CG/PI3Kgamma to promote neutrophil functional responses. In CD117(+) dendritic cells and mast cells, participates in an lipopolysaccharide (LPS)-activated signaling pathway that stimulates the production of interferon-gamma and other pro-inflammatory cytokines by natural killer (NK) cells. May function in mast cell differentiation. Does not appear to be required for the development of B-cells, DC-cells, T-cells, or NK-cells. Functionally, binds diacylglycerol (DAG). Its function is as follows. Unable to bind diacylglycerol (DAG). The protein is RAS guanyl-releasing protein 4 (Rasgrp4) of Mus musculus (Mouse).